Consider the following 708-residue polypeptide: Quinohemoprotein alcohol dehydrogenase (708 aa).

An N-terminal signal peptide occupies residues 1–31 (MERLIDNSHGWPGRMVWLLAACLGSAAAFAQ). Position 101 (Glu101) interacts with pyrroloquinoline quinone. Cys147 and Cys148 form a disulfide bridge. Pyrroloquinoline quinone is bound by residues Arg153, Thr198, and 214–215 (GA). Glu216 is a binding site for Ca(2+). Pyrroloquinoline quinone is bound at residue Thr274. Residues Asn294 and Asp339 each coordinate Ca(2+). Residue Asp339 is the Proton acceptor of the active site. Pyrroloquinoline quinone contacts are provided by residues Lys366, 425 to 426 (NW), and Val575. One can recognise a Cytochrome c domain in the interval 619–708 (YDPAKVEAGT…GTADAIRPKP (90 aa)). 4 residues coordinate heme c: Cys635, Cys638, His639, and Met678.

Belongs to the bacterial PQQ dehydrogenase family. As to quaternary structure, monomer. Pyrroloquinoline quinone is required as a cofactor. Ca(2+) serves as cofactor. Requires heme c as cofactor. Post-translationally, in the crystallographic structures Trp-543 is oxidized to 2'-hydroxytryptophan.

The protein resides in the periplasm. The catalysed reaction is 2 oxidized [azurin] + a primary alcohol = 2 reduced [azurin] + an aldehyde + 2 H(+). In terms of biological role, catalyzes the dye-linked oxidation of primary alcohols to the corresponding aldehydes and the (subsequent) oxidation of the aldehydes to carboxylic acids. Methanol is not a substrate. This chain is Quinohemoprotein alcohol dehydrogenase, found in Comamonas testosteroni (Pseudomonas testosteroni).